A 218-amino-acid polypeptide reads, in one-letter code: Putative glutamine transport system permease protein GlnP (218 aa).

Residues 19–208 (TLVTLKYSII…ILVMLISFIA (190 aa)) enclose the ABC transmembrane type-1 domain. Helical transmembrane passes span 25–45 (YSIIAVILGLVIGMLLAICKV), 57–79 (FYTSIFRGTPLLVQLSIIYFAAP), 86–108 (FSVFMAGVISFALNSGAYVSEVI), and 187–207 (FFPMLIAACCYYILVMLISFI).

This sequence belongs to the binding-protein-dependent transport system permease family. HisMQ subfamily.

Its subcellular location is the cell inner membrane. Part of the binding-protein-dependent transport system for glutamine; probably responsible for the translocation of the substrate across the membrane. The chain is Putative glutamine transport system permease protein GlnP (glnP) from Rickettsia typhi (strain ATCC VR-144 / Wilmington).